Consider the following 137-residue polypeptide: MPDLNINEDLINNYQKLTNDIEIFHEISYIDFYNKMNNGKNSLIYLGKPTCPICVKFVPMLHDILAAKNMHIDYFNVDTFFENNSSDKINYINFFQTLNISQLPSLIFTHGDMNYQRLPIYTIKTPINAWITAINDK.

The polypeptide is Protein MesC (mesC) (Leuconostoc mesenteroides).